The sequence spans 77 residues: MKDNIHPDYHEINVVMTDGTEYKTRSTMGKAGDTLRLDIDPKSHPAWTGVHRMVDTAGQLAKFKKRFEGFGIKSDNS.

It belongs to the bacterial ribosomal protein bL31 family. Type A subfamily. In terms of assembly, part of the 50S ribosomal subunit.

Its function is as follows. Binds the 23S rRNA. The polypeptide is Large ribosomal subunit protein bL31 (Paramagnetospirillum magneticum (strain ATCC 700264 / AMB-1) (Magnetospirillum magneticum)).